A 116-amino-acid polypeptide reads, in one-letter code: U16-barytoxin-Tl1a (116 aa).

Residues 1–20 (MKTIIVFLSLLVLATKFGDA) form the signal peptide. The propeptide occupies 21–74 (KEGVNQKQKKEVTQNEFREEYLNEMAAMSLVQQLEAIERALFENEAGRNSRQKR). Disulfide bonds link Cys75–Cys90, Cys82–Cys95, and Cys89–Cys110.

It belongs to the neurotoxin 14 (magi-1) family. 06 (ICK-Trit) subfamily. As to expression, expressed by the venom gland.

The protein resides in the secreted. In terms of biological role, ion channel inhibitor. In Trittame loki (Brush-footed trapdoor spider), this protein is U16-barytoxin-Tl1a.